The chain runs to 225 residues: Elongation factor 1-beta (225 aa).

Residues 2-90 (GFGDLKTPAG…PSSVEDTTGS (89 aa)) enclose the GST C-terminal domain. Lysine 7 is subject to N6-acetyllysine. Serine 42 and serine 83 each carry phosphoserine. The disordered stretch occupies residues 73–115 (KKSLGKYGPSSVEDTTGSGAADAKDDDDIDLFGSDDEEESEEA). Threonine 88 is modified (phosphothreonine). Over residues 96 to 113 (KDDDDIDLFGSDDEEESE) the composition is skewed to acidic residues. Serine 106 carries the phosphoserine modification. Residue lysine 147 forms a Glycyl lysine isopeptide (Lys-Gly) (interchain with G-Cter in SUMO2) linkage. Phosphoserine is present on serine 174.

This sequence belongs to the EF-1-beta/EF-1-delta family. In terms of assembly, EF-1 is composed of 4 subunits: alpha, beta (alpha subunit of the eEF1B subcomplex), delta (beta subunit of the eEF1B subcomplex), and gamma (gamma subunit of the eEF1B subcomplex). Interacts with elongation factor EEF1A1. Post-translationally, phosphorylation affects the GDP/GTP exchange rate.

Catalytic subunit of the guanine nucleotide exchange factor (GEF) (eEF1B subcomplex) of the eukaryotic elongation factor 1 complex (eEF1). Stimulates the exchange of GDP for GTP on elongation factor 1A (eEF1A), probably by displacing GDP from the nucleotide binding pocket in eEF1A. The sequence is that of Elongation factor 1-beta (Eef1b) from Mus musculus (Mouse).